The following is a 556-amino-acid chain: Glutamine--tRNA ligase (556 aa).

Residues 39 to 49 carry the 'HIGH' region motif; that stretch reads PEPNGYLHIGH. Residues 40–42 and 46–52 contribute to the ATP site; these read EPN and HIGHAKS. Residues aspartate 72 and tyrosine 217 each contribute to the L-glutamine site. ATP-binding positions include threonine 236 and 267 to 268; that span reads RL. Residues 274 to 278 carry the 'KMSKS' region motif; sequence LTSKR.

Belongs to the class-I aminoacyl-tRNA synthetase family. In terms of assembly, monomer.

It localises to the cytoplasm. The catalysed reaction is tRNA(Gln) + L-glutamine + ATP = L-glutaminyl-tRNA(Gln) + AMP + diphosphate. This is Glutamine--tRNA ligase from Haemophilus ducreyi (strain 35000HP / ATCC 700724).